We begin with the raw amino-acid sequence, 165 residues long: Chaperone protein SicA (165 aa).

Belongs to the LcrH/SycD chaperone family. Dimer or higher-order oligomers.

It localises to the cytoplasm. In terms of biological role, type III secretion-associated chaperone required for SipB and SipC stabilization. Prevents premature association of SipB with SipC, which may lead to their targeting for degradation. Along with InvF, required for transcription activation of sigDE (sopB pipC), sicAsipBCDA, and sopE. The protein is Chaperone protein SicA (sicA) of Salmonella dublin.